A 244-amino-acid chain; its full sequence is Gamma-gliadin (244 aa).

A disordered region spans residues 18–64; it reads QQPFLQQPQQPSPQPQQVVQIISPATPTTIPSAGKPTSAPFPQQQQQ. Residues 35–48 are compositionally biased toward polar residues; that stretch reads VVQIISPATPTTIP.

The protein belongs to the gliadin/glutenin family.

In terms of biological role, gliadin is the major seed storage protein in wheat. This is Gamma-gliadin from Triticum aestivum (Wheat).